Consider the following 151-residue polypeptide: UPF0178 protein amb2838 (151 aa).

It belongs to the UPF0178 family.

In Paramagnetospirillum magneticum (strain ATCC 700264 / AMB-1) (Magnetospirillum magneticum), this protein is UPF0178 protein amb2838.